Here is a 517-residue protein sequence, read N- to C-terminus: Amidophosphoribosyltransferase (517 aa).

Met-1 carries the post-translational modification N-acetylmethionine. A propeptide spanning residues 1 to 11 (MELEELGIREE) is cleaved from the precursor. Catalysis depends on Cys-12, which acts as the Nucleophile. The region spanning 12–261 (CGVFGCIASG…PGEIVEISRH (250 aa)) is the Glutamine amidotransferase type-2 domain. Residue Cys-280 coordinates [4Fe-4S] cluster. Residues Ser-327, Asp-389, and Asp-390 each contribute to the Mg(2+) site. [4Fe-4S] cluster contacts are provided by Cys-426, Cys-503, and Cys-506.

In the C-terminal section; belongs to the purine/pyrimidine phosphoribosyltransferase family. Homotetramer. Mg(2+) serves as cofactor. It depends on [4Fe-4S] cluster as a cofactor.

It catalyses the reaction 5-phospho-beta-D-ribosylamine + L-glutamate + diphosphate = 5-phospho-alpha-D-ribose 1-diphosphate + L-glutamine + H2O. It participates in purine metabolism; IMP biosynthesis via de novo pathway; N(1)-(5-phospho-D-ribosyl)glycinamide from 5-phospho-alpha-D-ribose 1-diphosphate: step 1/2. Catalyzes the formation of phosphoribosylamine from phosphoribosylpyrophosphate (PRPP) and glutamine. This chain is Amidophosphoribosyltransferase, found in Mus musculus (Mouse).